The primary structure comprises 650 residues: MESGGPGNYSAAARRPLHSAQAVDVASASSFRAFEILHLHLDLRAEFGPPGPGPGSRGLSGTATLELRCLLPEGASELRLDSHSCLEVTAATLRRGQPGDQQAPAEPVPFHTQPFSHYGQALCVAFRQPCGAADRFELELTYRVGEGPGVCWLAPEQTAGKKKPFVYTQGQAVLNRAFFPCFDTPAVKCTYSALIEVPDGFTAVMSADTWEKRGPNKFFFQMSHPIPSYLIALAIGDLASAEVGPRSRVWAEPCLIEAAKEEYSGVIEEFLATGEKLFGPYVWGRYDLLFMPPSFPFGGMENPCLTFVTPCLLAGDRSLADVIIHEISHSWFGNLVTNANWGEFWLNEGFTMYAQRRISTILFGAAYTCLEAATGRALLRQHMNVSGEENPLNKLRVKIEPGVDPDDTYNETPYEKGYCFVSYLAHLVGDQDQFDKFLKAYVDEFKFQSILAEDFLEFYLEYFPELKKKGVDSIPGFEFDRWLNTPGWPPYLPDLSPGDSLMKPAEELAELWVTSEPDMQAIEAVAISTWKTYQLVYFLDKILQKSPLPPGNVKKLGETYPKISNAQNAELRLRWGQIILKNDYQEEFQKVKDFLQSQGKQKYTLPLYHAMMGGSEMARTLAKDTFAATASQLHSNVVNYVQQILAPKDS.

298-302 is a substrate binding site; that stretch reads GGMEN. Position 325 (histidine 325) interacts with Zn(2+). Glutamate 326 acts as the Proton acceptor in catalysis. Residues histidine 329 and glutamate 348 each coordinate Zn(2+). An N6-acetyllysine modification is found at lysine 446.

The protein belongs to the peptidase M1 family. As to quaternary structure, monomer. Zn(2+) serves as cofactor.

The protein resides in the secreted. The catalysed reaction is Release of N-terminal Arg and Lys from oligopeptides when P1' is not Pro. Also acts on arylamides of Arg and Lys.. Exopeptidase which selectively removes arginine and/or lysine residues from the N-terminus of several peptide substrates including Arg(0)-Leu-enkephalin, Arg(0)-Met-enkephalin and Arg(-1)-Lys(0)-somatostatin-14. Can hydrolyze leukotriene A4 (LTA-4) into leukotriene B4 (LTB-4). The sequence is that of Aminopeptidase B (Rnpep) from Mus musculus (Mouse).